A 419-amino-acid chain; its full sequence is Septin-2 (419 aa).

A Septin-type G domain is found at 40-306; that stretch reads NGFVFNVMCI…ELYRQKRLEQ (267 aa). Residues 50–57 form a G1 motif region; sequence GETGLGKS. GTP-binding positions include 50-57, serine 79, glycine 105, 186-194, glycine 240, and arginine 255; these read GETGLGKS and KADTISKVE. The segment at 102 to 105 is G3 motif; that stretch reads DTVG. The tract at residues 185–188 is G4 motif; that stretch reads AKAD. The tract at residues 259 to 269 is important for dimerization; that stretch reads WGTVQVENETH.

Belongs to the TRAFAC class TrmE-Era-EngA-EngB-Septin-like GTPase superfamily. Septin GTPase family. In terms of assembly, may assemble into a multicomponent structure.

The protein resides in the cytoplasm. Its subcellular location is the cytoskeleton. It localises to the spindle. Functionally, involved in cytokinesis. This is Septin-2 from Drosophila melanogaster (Fruit fly).